Consider the following 248-residue polypeptide: Malonyl-[acyl-carrier protein] O-methyltransferase 2 (248 aa).

Belongs to the methyltransferase superfamily.

The enzyme catalyses malonyl-[ACP] + S-adenosyl-L-methionine = malonyl-[ACP] methyl ester + S-adenosyl-L-homocysteine. It functions in the pathway cofactor biosynthesis; biotin biosynthesis. Functionally, converts the free carboxyl group of a malonyl-thioester to its methyl ester by transfer of a methyl group from S-adenosyl-L-methionine (SAM). It allows to synthesize pimeloyl-ACP via the fatty acid synthetic pathway. In Coxiella burnetii (strain RSA 493 / Nine Mile phase I), this protein is Malonyl-[acyl-carrier protein] O-methyltransferase 2.